The chain runs to 361 residues: L-threonine 3-dehydrogenase (361 aa).

Cys-38 is a Zn(2+) binding site. Active-site charge relay system residues include Thr-40 and His-43. Positions 63, 64, 93, 96, 99, and 107 each coordinate Zn(2+). NAD(+) is bound by residues Ile-175, Asp-195, Arg-200, 262 to 264 (LGI), and 286 to 287 (IY).

This sequence belongs to the zinc-containing alcohol dehydrogenase family. Homotetramer. Zn(2+) serves as cofactor.

Its subcellular location is the cytoplasm. It carries out the reaction L-threonine + NAD(+) = (2S)-2-amino-3-oxobutanoate + NADH + H(+). It participates in amino-acid degradation; L-threonine degradation via oxydo-reductase pathway; glycine from L-threonine: step 1/2. Functionally, catalyzes the NAD(+)-dependent oxidation of L-threonine to 2-amino-3-ketobutyrate. This is L-threonine 3-dehydrogenase from Pectobacterium atrosepticum (strain SCRI 1043 / ATCC BAA-672) (Erwinia carotovora subsp. atroseptica).